The sequence spans 353 residues: UPF0283 membrane protein YcjF (353 aa).

A compositionally biased stretch (basic and acidic residues) spans 1–19 (MSEPLKPRIDFAEPLKEEP). Residues 1–35 (MSEPLKPRIDFAEPLKEEPTSAFKAQQTFSEAESR) form a disordered region. The next 3 membrane-spanning stretches (helical) occupy residues 70-90 (MVMG…VQWT), 100-120 (VALG…GSVV), and 213-233 (ESTL…FIAW).

This sequence belongs to the UPF0283 family.

It localises to the cell inner membrane. In Salmonella paratyphi B (strain ATCC BAA-1250 / SPB7), this protein is UPF0283 membrane protein YcjF.